The chain runs to 417 residues: Blood group Rh(D) polypeptide (417 aa).

The next 11 helical transmembrane spans lie at 12–32 (CLPLWALTLEAALILLFYFFT), 44–64 (LVASYQVGQDLTVMAAIGLGF), 77–97 (VAFNLFMLALGVQWAILLDGF), 107–127 (VITLFSIRLATMSALSVLISV), 130–150 (VLGKVNLAQLVVMVLVEVTAL), 167–187 (MNMMHIYVFAAYFGLSVAWCL), 203–223 (TIPSLSAMLGALFLWMFWPSF), 238–258 (VFNTYYAVAVSVVTAISGSSL), 287–307 (LIPSPWLAMVLGLVAGLISVG), 334–354 (LLGLLGEIIYIVLLVLDTVGA), and 358–378 (MIGFQVLLSIGELSLAIVIAL).

This sequence belongs to the ammonium transporter (TC 2.A.49) family. Rh subfamily. In terms of processing, palmitoylated. Restricted to tissues or cell lines expressing erythroid characters.

The protein resides in the cell membrane. Functionally, may be part of an oligomeric complex which is likely to have a transport or channel function in the erythrocyte membrane. The chain is Blood group Rh(D) polypeptide (RHD) from Homo sapiens (Human).